The sequence spans 244 residues: MNKKNIKDSQNFITSKHHINEILRNVHLNTNDNIIEIGSGKGHFSFELAKRCNYVTAIEIDPKLCRITKNKLIEYENFQVINKDILQFKFPKNKSYKIFGNIPYNISTDIIRKIVFESTATESYLIVEYGFAKRLLNTNRSLALFLMTEVDISILSKIPREYFHPKPRVNSSLIVLKRHPSKISLKDRKQYENFVMKWVNKEYIKLFSKNQFYQALKYARIDDLNNISFEQFLSLFNSYKLFNR.

S-adenosyl-L-methionine contacts are provided by Asn11, Ile13, Gly38, Glu59, Asp84, and Asn101.

The protein belongs to the class I-like SAM-binding methyltransferase superfamily. rRNA adenine N(6)-methyltransferase family.

The catalysed reaction is adenosine(2085) in 23S rRNA + 2 S-adenosyl-L-methionine = N(6)-dimethyladenosine(2085) in 23S rRNA + 2 S-adenosyl-L-homocysteine + 2 H(+). Its function is as follows. This protein produces a dimethylation of the adenine residue at position 2085 in 23S rRNA, resulting in reduced affinity between ribosomes and macrolide-lincosamide-streptogramin B antibiotics. Is involved in erythromycin resistance. In Limosilactobacillus reuteri (Lactobacillus reuteri), this protein is rRNA adenine N-6-methyltransferase (ermGT).